Consider the following 265-residue polypeptide: Tryptophan synthase alpha chain (265 aa).

Residues Glu49 and Asp60 each act as proton acceptor in the active site.

It belongs to the TrpA family. Tetramer of two alpha and two beta chains.

It catalyses the reaction (1S,2R)-1-C-(indol-3-yl)glycerol 3-phosphate + L-serine = D-glyceraldehyde 3-phosphate + L-tryptophan + H2O. Its pathway is amino-acid biosynthesis; L-tryptophan biosynthesis; L-tryptophan from chorismate: step 5/5. The alpha subunit is responsible for the aldol cleavage of indoleglycerol phosphate to indole and glyceraldehyde 3-phosphate. This Polynucleobacter necessarius subsp. necessarius (strain STIR1) protein is Tryptophan synthase alpha chain.